A 126-amino-acid chain; its full sequence is Large ribosomal subunit protein bL12 (126 aa).

This sequence belongs to the bacterial ribosomal protein bL12 family. In terms of assembly, homodimer. Part of the ribosomal stalk of the 50S ribosomal subunit. Forms a multimeric L10(L12)X complex, where L10 forms an elongated spine to which 2 to 4 L12 dimers bind in a sequential fashion. Binds GTP-bound translation factors.

Forms part of the ribosomal stalk which helps the ribosome interact with GTP-bound translation factors. Is thus essential for accurate translation. The chain is Large ribosomal subunit protein bL12 from Francisella tularensis subsp. mediasiatica (strain FSC147).